The sequence spans 239 residues: Peptidyl-tRNA hydrolase (239 aa).

Tyr-14 serves as a coordination point for tRNA. His-19 (proton acceptor) is an active-site residue. The tRNA site is built by Phe-64, Asn-66, and Asn-112. Residues 186–239 (RTAPPRPSTGTGRPPAKTPARAEEPPAPAASPAPATAPLPDARSPLQKLVDRFK) form a disordered region. Residues 193-204 (STGTGRPPAKTP) show a composition bias toward low complexity. Positions 210–222 (PPAPAASPAPATA) are enriched in pro residues.

This sequence belongs to the PTH family. As to quaternary structure, monomer.

Its subcellular location is the cytoplasm. It carries out the reaction an N-acyl-L-alpha-aminoacyl-tRNA + H2O = an N-acyl-L-amino acid + a tRNA + H(+). In terms of biological role, hydrolyzes ribosome-free peptidyl-tRNAs (with 1 or more amino acids incorporated), which drop off the ribosome during protein synthesis, or as a result of ribosome stalling. Catalyzes the release of premature peptidyl moieties from peptidyl-tRNA molecules trapped in stalled 50S ribosomal subunits, and thus maintains levels of free tRNAs and 50S ribosomes. The chain is Peptidyl-tRNA hydrolase from Ruegeria pomeroyi (strain ATCC 700808 / DSM 15171 / DSS-3) (Silicibacter pomeroyi).